A 293-amino-acid polypeptide reads, in one-letter code: 4-hydroxy-tetrahydrodipicolinate synthase (293 aa).

Position 45 (Thr-45) interacts with pyruvate. The Proton donor/acceptor role is filled by Tyr-133. Lys-162 acts as the Schiff-base intermediate with substrate in catalysis. Ile-204 lines the pyruvate pocket.

The protein belongs to the DapA family. Homotetramer; dimer of dimers.

The protein resides in the cytoplasm. It carries out the reaction L-aspartate 4-semialdehyde + pyruvate = (2S,4S)-4-hydroxy-2,3,4,5-tetrahydrodipicolinate + H2O + H(+). Its pathway is amino-acid biosynthesis; L-lysine biosynthesis via DAP pathway; (S)-tetrahydrodipicolinate from L-aspartate: step 3/4. Catalyzes the condensation of (S)-aspartate-beta-semialdehyde [(S)-ASA] and pyruvate to 4-hydroxy-tetrahydrodipicolinate (HTPA). This is 4-hydroxy-tetrahydrodipicolinate synthase from Brucella suis biovar 1 (strain 1330).